Reading from the N-terminus, the 239-residue chain is mRNA turnover protein 4 homolog (239 aa).

Residues glutamine 216–serine 239 form a disordered region. The span at methionine 218–serine 239 shows a compositional bias: acidic residues. Serine 225, serine 229, and serine 233 each carry phosphoserine.

The protein belongs to the universal ribosomal protein uL10 family. As to quaternary structure, associates with the pre-60S ribosomal particle. Interacts with MINAS-60 (product of an alternative open reading frame of RBM10).

It is found in the nucleus. Its subcellular location is the nucleolus. The protein resides in the cytoplasm. Component of the ribosome assembly machinery. Nuclear paralog of the ribosomal protein P0, it binds pre-60S subunits at an early stage of assembly in the nucleolus, and is replaced by P0 in cytoplasmic pre-60S subunits and mature 80S ribosomes. In Mus musculus (Mouse), this protein is mRNA turnover protein 4 homolog (Mrto4).